The chain runs to 301 residues: UDP-3-O-acyl-N-acetylglucosamine deacetylase (301 aa).

3 residues coordinate Zn(2+): histidine 81, histidine 237, and aspartate 241. Residue histidine 264 is the Proton donor of the active site.

The protein belongs to the LpxC family. Zn(2+) serves as cofactor.

It carries out the reaction a UDP-3-O-[(3R)-3-hydroxyacyl]-N-acetyl-alpha-D-glucosamine + H2O = a UDP-3-O-[(3R)-3-hydroxyacyl]-alpha-D-glucosamine + acetate. It participates in glycolipid biosynthesis; lipid IV(A) biosynthesis; lipid IV(A) from (3R)-3-hydroxytetradecanoyl-[acyl-carrier-protein] and UDP-N-acetyl-alpha-D-glucosamine: step 2/6. In terms of biological role, catalyzes the hydrolysis of UDP-3-O-myristoyl-N-acetylglucosamine to form UDP-3-O-myristoylglucosamine and acetate, the committed step in lipid A biosynthesis. The polypeptide is UDP-3-O-acyl-N-acetylglucosamine deacetylase (Leptospira interrogans serogroup Icterohaemorrhagiae serovar copenhageni (strain Fiocruz L1-130)).